The following is a 359-amino-acid chain: Probable NAD(P)H nitroreductase PigM (359 aa).

The protein belongs to the nitroreductase family. It depends on FMN as a cofactor.

Its pathway is antibiotic biosynthesis; prodigiosin biosynthesis. Functionally, involved in the biosynthesis of 4-methoxy-2,2'-bipyrrole-5-carbaldehyde (MBC), one of the terminal products involved in the biosynthesis of the red antibiotic prodigiosin (Pig). Catalyzes the oxidation of the hydroxy group of 4-hydroxy-2,2'-bipyrrole-5-methanol (HBM) to yield 4-methoxy-2,2'-bipyrrole-5-carbaldehyde (MBC). This chain is Probable NAD(P)H nitroreductase PigM, found in Serratia sp. (strain ATCC 39006) (Prodigiosinella confusarubida).